We begin with the raw amino-acid sequence, 597 residues long: Elongation factor 4 (597 aa).

A tr-type G domain is found at 2–184 (KHIRNFSIIA…TIVKCIPAPE (183 aa)). GTP-binding positions include 14–19 (DHGKST) and 131–134 (NKID).

It belongs to the TRAFAC class translation factor GTPase superfamily. Classic translation factor GTPase family. LepA subfamily.

The protein localises to the cell inner membrane. The catalysed reaction is GTP + H2O = GDP + phosphate + H(+). In terms of biological role, required for accurate and efficient protein synthesis under certain stress conditions. May act as a fidelity factor of the translation reaction, by catalyzing a one-codon backward translocation of tRNAs on improperly translocated ribosomes. Back-translocation proceeds from a post-translocation (POST) complex to a pre-translocation (PRE) complex, thus giving elongation factor G a second chance to translocate the tRNAs correctly. Binds to ribosomes in a GTP-dependent manner. This Aliivibrio salmonicida (strain LFI1238) (Vibrio salmonicida (strain LFI1238)) protein is Elongation factor 4.